An 87-amino-acid polypeptide reads, in one-letter code: Sec-independent protein translocase protein TatA (87 aa).

Residues 1–21 form a helical membrane-spanning segment; that stretch reads MGGMSITHWIVVAVVVMIFFG. Residues 40–87 form a disordered region; that stretch reads KKGMSEDDTTPPAAPPAPAPRLENQPLPPENTTQNVAQNVPNDIKNNQ. The segment covering 69-87 has biased composition (polar residues); the sequence is ENTTQNVAQNVPNDIKNNQ.

Belongs to the TatA/E family. As to quaternary structure, the Tat system comprises two distinct complexes: a TatABC complex, containing multiple copies of TatA, TatB and TatC subunits, and a separate TatA complex, containing only TatA subunits. Substrates initially bind to the TatABC complex, which probably triggers association of the separate TatA complex to form the active translocon.

It localises to the cell inner membrane. In terms of biological role, part of the twin-arginine translocation (Tat) system that transports large folded proteins containing a characteristic twin-arginine motif in their signal peptide across membranes. TatA could form the protein-conducting channel of the Tat system. This Zymomonas mobilis subsp. mobilis (strain ATCC 31821 / ZM4 / CP4) protein is Sec-independent protein translocase protein TatA.